Consider the following 79-residue polypeptide: Large ribosomal subunit protein uL29 (79 aa).

It belongs to the universal ribosomal protein uL29 family.

This is Large ribosomal subunit protein uL29 from Gluconacetobacter diazotrophicus (strain ATCC 49037 / DSM 5601 / CCUG 37298 / CIP 103539 / LMG 7603 / PAl5).